Here is a 497-residue protein sequence, read N- to C-terminus: Probable cytosol aminopeptidase (497 aa).

Residues Lys-267 and Asp-272 each contribute to the Mn(2+) site. Lys-279 is a catalytic residue. Residues Asp-290, Asp-349, and Glu-351 each coordinate Mn(2+). Arg-353 is an active-site residue.

Belongs to the peptidase M17 family. It depends on Mn(2+) as a cofactor.

The protein resides in the cytoplasm. It catalyses the reaction Release of an N-terminal amino acid, Xaa-|-Yaa-, in which Xaa is preferably Leu, but may be other amino acids including Pro although not Arg or Lys, and Yaa may be Pro. Amino acid amides and methyl esters are also readily hydrolyzed, but rates on arylamides are exceedingly low.. It carries out the reaction Release of an N-terminal amino acid, preferentially leucine, but not glutamic or aspartic acids.. In terms of biological role, presumably involved in the processing and regular turnover of intracellular proteins. Catalyzes the removal of unsubstituted N-terminal amino acids from various peptides. The protein is Probable cytosol aminopeptidase of Nitrosomonas europaea (strain ATCC 19718 / CIP 103999 / KCTC 2705 / NBRC 14298).